We begin with the raw amino-acid sequence, 154 residues long: 6,7-dimethyl-8-ribityllumazine synthase (154 aa).

5-amino-6-(D-ribitylamino)uracil contacts are provided by residues phenylalanine 26, 60-62 (ALE), and 84-86 (CII). 89 to 90 (ET) is a (2S)-2-hydroxy-3-oxobutyl phosphate binding site. The active-site Proton donor is histidine 92. Asparagine 117 contributes to the 5-amino-6-(D-ribitylamino)uracil binding site. (2S)-2-hydroxy-3-oxobutyl phosphate is bound at residue arginine 131.

It belongs to the DMRL synthase family.

The catalysed reaction is (2S)-2-hydroxy-3-oxobutyl phosphate + 5-amino-6-(D-ribitylamino)uracil = 6,7-dimethyl-8-(1-D-ribityl)lumazine + phosphate + 2 H2O + H(+). It participates in cofactor biosynthesis; riboflavin biosynthesis; riboflavin from 2-hydroxy-3-oxobutyl phosphate and 5-amino-6-(D-ribitylamino)uracil: step 1/2. Functionally, catalyzes the formation of 6,7-dimethyl-8-ribityllumazine by condensation of 5-amino-6-(D-ribitylamino)uracil with 3,4-dihydroxy-2-butanone 4-phosphate. This is the penultimate step in the biosynthesis of riboflavin. In Acidovorax ebreus (strain TPSY) (Diaphorobacter sp. (strain TPSY)), this protein is 6,7-dimethyl-8-ribityllumazine synthase.